Reading from the N-terminus, the 563-residue chain is Delta-1-pyrroline-5-carboxylate dehydrogenase, mitochondrial (563 aa).

The N-terminal 23 residues, methionine 1–tryptophan 23, are a transit peptide targeting the mitochondrion. At lysine 30 the chain carries N6-succinyllysine. Serine 43 bears the Phosphoserine mark. Lysine 51 bears the N6-acetyllysine mark. N6-acetyllysine; alternate is present on residues lysine 92, lysine 98, lysine 113, lysine 129, and lysine 174. Lysine 92, lysine 98, lysine 113, lysine 129, and lysine 174 each carry N6-succinyllysine; alternate. Residues serine 207, lysine 232, and glycine 285–threonine 289 each bind NAD(+). The active-site Proton acceptor is glutamate 313. Lysine 317 is subject to N6-acetyllysine. Lysine 346 bears the N6-succinyllysine mark. The active-site Nucleophile is cysteine 347. An N6-acetyllysine mark is found at lysine 364 and lysine 375. Residue lysine 394 is modified to N6-succinyllysine. Residue glutamate 446 coordinates NAD(+). Lysine 461 carries the N6-acetyllysine modification. Lysine 508 bears the N6-acetyllysine; alternate mark. Lysine 508 carries the post-translational modification N6-succinyllysine; alternate. Serine 512 serves as a coordination point for substrate.

This sequence belongs to the aldehyde dehydrogenase family. In terms of assembly, homodimer.

The protein localises to the mitochondrion matrix. It catalyses the reaction L-glutamate 5-semialdehyde + NAD(+) + H2O = L-glutamate + NADH + 2 H(+). Its pathway is amino-acid degradation; L-proline degradation into L-glutamate; L-glutamate from L-proline: step 2/2. Its function is as follows. Irreversible conversion of delta-1-pyrroline-5-carboxylate (P5C), derived either from proline or ornithine, to glutamate. This is a necessary step in the pathway interconnecting the urea and tricarboxylic acid cycles. The preferred substrate is glutamic gamma-semialdehyde, other substrates include succinic, glutaric and adipic semialdehydes. In Rattus norvegicus (Rat), this protein is Delta-1-pyrroline-5-carboxylate dehydrogenase, mitochondrial (Aldh4a1).